A 241-amino-acid polypeptide reads, in one-letter code: Queuine tRNA-ribosyltransferase-like protein (241 aa).

Belongs to the queuine tRNA-ribosyltransferase family.

The polypeptide is Queuine tRNA-ribosyltransferase-like protein (Plasmodium falciparum).